Consider the following 186-residue polypeptide: Elongation factor P (186 aa).

Belongs to the elongation factor P family.

Its subcellular location is the cytoplasm. It functions in the pathway protein biosynthesis; polypeptide chain elongation. Involved in peptide bond synthesis. Stimulates efficient translation and peptide-bond synthesis on native or reconstituted 70S ribosomes in vitro. Probably functions indirectly by altering the affinity of the ribosome for aminoacyl-tRNA, thus increasing their reactivity as acceptors for peptidyl transferase. The polypeptide is Elongation factor P (Neisseria gonorrhoeae (strain ATCC 700825 / FA 1090)).